Reading from the N-terminus, the 103-residue chain is MHVKKGDKVQVMTGKDKGKQGVVLTAMPKKDRVIVEGVNMIKKHSKPSQLNPQGGIVEKEAPIHVSNVMLIDPKTGNPTRVGFTVVDGKKVRIAKKSGEALDK.

The protein belongs to the universal ribosomal protein uL24 family. Part of the 50S ribosomal subunit.

In terms of biological role, one of two assembly initiator proteins, it binds directly to the 5'-end of the 23S rRNA, where it nucleates assembly of the 50S subunit. One of the proteins that surrounds the polypeptide exit tunnel on the outside of the subunit. The polypeptide is Large ribosomal subunit protein uL24 (Exiguobacterium sibiricum (strain DSM 17290 / CCUG 55495 / CIP 109462 / JCM 13490 / 255-15)).